Reading from the N-terminus, the 100-residue chain is Putative septation protein SpoVG (100 aa).

It belongs to the SpoVG family.

Could be involved in septation. This Staphylococcus aureus (strain MRSA252) protein is Putative septation protein SpoVG.